A 168-amino-acid chain; its full sequence is Photosystem I assembly protein Ycf3 (168 aa).

3 TPR repeats span residues 35-68 (AFTY…EIDP), 72-105 (SYIL…NPFL), and 120-153 (GEQA…TPGN).

The protein belongs to the Ycf3 family.

The protein localises to the plastid. It localises to the chloroplast thylakoid membrane. In terms of biological role, essential for the assembly of the photosystem I (PSI) complex. May act as a chaperone-like factor to guide the assembly of the PSI subunits. This is Photosystem I assembly protein Ycf3 from Lactuca sativa (Garden lettuce).